The following is a 396-amino-acid chain: Acetate kinase (396 aa).

Position 8 (asparagine 8) interacts with Mg(2+). An ATP-binding site is contributed by lysine 15. Arginine 89 lines the substrate pocket. The Proton donor/acceptor role is filled by aspartate 146. Residues 206–210, 283–285, and 331–335 contribute to the ATP site; these read HIGNG, DMR, and GVGEN. Glutamate 383 contributes to the Mg(2+) binding site.

This sequence belongs to the acetokinase family. As to quaternary structure, homodimer. It depends on Mg(2+) as a cofactor. The cofactor is Mn(2+).

The protein resides in the cytoplasm. The catalysed reaction is acetate + ATP = acetyl phosphate + ADP. It participates in metabolic intermediate biosynthesis; acetyl-CoA biosynthesis; acetyl-CoA from acetate: step 1/2. Catalyzes the formation of acetyl phosphate from acetate and ATP. Can also catalyze the reverse reaction. The chain is Acetate kinase from Streptococcus pneumoniae (strain 70585).